A 462-amino-acid polypeptide reads, in one-letter code: Polygalacturonase (462 aa).

An N-terminal signal peptide occupies residues 1–22; it reads MALTRLLLPISILWFCFYSSHT. Asparagine 173 carries an N-linked (GlcNAc...) asparagine glycan. Aspartate 278 serves as the catalytic Proton donor. Cysteine 280 and cysteine 297 are oxidised to a cystine. N-linked (GlcNAc...) asparagine glycosylation occurs at asparagine 294. Histidine 301 is a catalytic residue. Asparagine 358 is a glycosylation site (N-linked (GlcNAc...) asparagine). Cystine bridges form between cysteine 407-cysteine 413 and cysteine 435-cysteine 460.

This sequence belongs to the glycosyl hydrolase 28 family.

The protein localises to the secreted. It localises to the cell wall. It catalyses the reaction (1,4-alpha-D-galacturonosyl)n+m + H2O = (1,4-alpha-D-galacturonosyl)n + (1,4-alpha-D-galacturonosyl)m.. Its function is as follows. Acts in concert with the pectinesterase, in the ripening process. Is involved in cell wall metabolism, specifically in polyuronide degradation. The polypeptide is Polygalacturonase (Persea americana (Avocado)).